A 500-amino-acid polypeptide reads, in one-letter code: Glycerol kinase (500 aa).

Thr-13 is a binding site for ADP. Residues Thr-13, Thr-14, and Ser-15 each coordinate ATP. A sn-glycerol 3-phosphate-binding site is contributed by Thr-13. An ADP-binding site is contributed by Arg-17. Sn-glycerol 3-phosphate is bound by residues Arg-83, Glu-84, Tyr-135, and Asp-244. Residues Arg-83, Glu-84, Tyr-135, Asp-244, and Gln-245 each contribute to the glycerol site. Thr-266 and Gly-309 together coordinate ADP. 4 residues coordinate ATP: Thr-266, Gly-309, Gln-313, and Gly-410. ADP-binding residues include Gly-410 and Asn-414.

This sequence belongs to the FGGY kinase family.

The enzyme catalyses glycerol + ATP = sn-glycerol 3-phosphate + ADP + H(+). It participates in polyol metabolism; glycerol degradation via glycerol kinase pathway; sn-glycerol 3-phosphate from glycerol: step 1/1. Inhibited by fructose 1,6-bisphosphate (FBP). Key enzyme in the regulation of glycerol uptake and metabolism. Catalyzes the phosphorylation of glycerol to yield sn-glycerol 3-phosphate. This chain is Glycerol kinase, found in Burkholderia ambifaria (strain ATCC BAA-244 / DSM 16087 / CCUG 44356 / LMG 19182 / AMMD) (Burkholderia cepacia (strain AMMD)).